A 76-amino-acid chain; its full sequence is Heat shock factor-binding protein 1 (76 aa).

This sequence belongs to the HSBP1 family. Homohexamer. Associates with heptad repeats of HSF1 trimers and probably also HSF1 monomers, and with HSP70. Association with HSF1 trimers and HSP70 coincides with attenuation of heat shock response and the conversion of HSF1 trimer to monomer.

Its subcellular location is the nucleus. In terms of biological role, negative regulator of the heat shock response. Negatively affects HSF1 DNA-binding activity. May have a role in the suppression of the activation of the stress response during the aging process. This chain is Heat shock factor-binding protein 1 (HSBP1), found in Homo sapiens (Human).